Here is a 374-residue protein sequence, read N- to C-terminus: MASRNIWRVRRNFLFDLRGWVPQYSAEVFLKSIPFRPFSVECNSKDGENGDLLNNLLTMGVDVDMARRRQPGVFNKAVTNEQELKMFLLSKGASDKVIGSIISRYPRAITRTPESLSKRWDLWREIMASDLEIVNILERSPESFFRSNNNLNLENNIKFLCSVGLTHKCLCRLLTSAPRTFSNSLNLNKQMVEFLQETGISLGHNNPTDFVRKIISKNPSILIQSTKRVKTNIEFLQSTFNLDKEDLLLLICGPGARILDLSNDCTKRNYTNIKKRLLSLGCTEEEVQKFVLSYLNMIFLSEKKFNDKIDCLLEEKISTSQILENPRVLDSSIHTLKTRIRELAHAGYDVSTSSIALLSWSQRRYEAKLKRLSG.

Residues 1–37 (MASRNIWRVRRNFLFDLRGWVPQYSAEVFLKSIPFRP) constitute a mitochondrion transit peptide. Interaction with DNA stretches follow at residues 146–147 (RS), 224–228 (QSTKR), 301–308 (SEKKFNDK), 332–335 (SIHT), and 361–368 (SQRRYEAK).

Belongs to the mTERF family. Monomer. Post-translationally, is a phosphoprotein. While the DNA-binding activity is unaffected by the phosphorylation/dephosphorylation state, only the phosphorylated form of the protein is active for termination activity. Functioning seems to be regulated by phosphorylation.

The protein resides in the mitochondrion. Its function is as follows. Transcription termination factor. Binds to a 28 bp region within the tRNA(Leu(uur)) gene at a position immediately adjacent to and downstream of the 16S rRNA gene; this region comprises a tridecamer sequence critical for directing accurate termination. Binds DNA along the major grove and promotes DNA bending and partial unwinding. Promotes base flipping. Transcription termination activity appears to be polarized with highest specificity for transcripts initiated on the light strand. This is Transcription termination factor 1, mitochondrial (Mterf1) from Rattus norvegicus (Rat).